Consider the following 338-residue polypeptide: Acetylcholinesterase (338 aa).

The N-linked (GlcNAc...) asparagine glycan is linked to Asn8. Ser99 functions as the Acyl-ester intermediate in the catalytic mechanism. A disulfide bridge connects residues Cys153 and Cys164. Catalysis depends on Glu226, which acts as the Charge relay system.

The protein belongs to the type-B carboxylesterase/lipase family.

It localises to the synapse. The protein localises to the secreted. Its subcellular location is the cell membrane. The enzyme catalyses acetylcholine + H2O = choline + acetate + H(+). In terms of biological role, terminates signal transduction at the neuromuscular junction by rapid hydrolysis of the acetylcholine released into the synaptic cleft. In Myxine glutinosa (Atlantic hagfish), this protein is Acetylcholinesterase (ache).